A 225-amino-acid polypeptide reads, in one-letter code: Ribonuclease 3 (225 aa).

The 123-residue stretch at 5-127 (LDRLQRSLGH…VFAATFLDQG (123 aa)) folds into the RNase III domain. Glu40 is a Mg(2+) binding site. Asp44 is a catalytic residue. Mg(2+) is bound by residues Asp113 and Glu116. Residue Glu116 is part of the active site. A DRBM domain is found at 154–224 (DPKTALQELL…AELALAQLRK (71 aa)).

It belongs to the ribonuclease III family. In terms of assembly, homodimer. The cofactor is Mg(2+).

The protein localises to the cytoplasm. The catalysed reaction is Endonucleolytic cleavage to 5'-phosphomonoester.. Functionally, digests double-stranded RNA. Involved in the processing of primary rRNA transcript to yield the immediate precursors to the large and small rRNAs (23S and 16S). Processes some mRNAs, and tRNAs when they are encoded in the rRNA operon. Processes pre-crRNA and tracrRNA of type II CRISPR loci if present in the organism. This chain is Ribonuclease 3, found in Aromatoleum aromaticum (strain DSM 19018 / LMG 30748 / EbN1) (Azoarcus sp. (strain EbN1)).